The sequence spans 129 residues: Large ribosomal subunit protein bL17 (129 aa).

It belongs to the bacterial ribosomal protein bL17 family. Part of the 50S ribosomal subunit. Contacts protein L32.

In Desulfotalea psychrophila (strain LSv54 / DSM 12343), this protein is Large ribosomal subunit protein bL17.